Reading from the N-terminus, the 229-residue chain is High molecular weight rubredoxin (229 aa).

The tract at residues M1–T158 is flavodoxin-reductase-like. In terms of domain architecture, Rubredoxin-like spans S178–I229. C183, C186, C216, and C219 together coordinate Fe cation.

In the N-terminal section; belongs to the flavodoxin reductase family. As to quaternary structure, homodimer. Requires Fe cation as cofactor. The cofactor is FMN.

Its function is as follows. Has nitric oxide reductase activity in combination with FprA; probably involved in nitrosative stress protection. Acts as an NADH:FprA oxidoreductase. This is High molecular weight rubredoxin (hrb) from Moorella thermoacetica (strain ATCC 39073 / JCM 9320).